A 484-amino-acid polypeptide reads, in one-letter code: Phosphomethylpyrimidine synthase (484 aa).

Substrate-binding positions include Asn97, Met126, Tyr156, His192, 212–214 (SRG), 253–256 (DSLR), and Glu292. Zn(2+) is bound at residue His296. Tyr319 is a binding site for substrate. His360 provides a ligand contact to Zn(2+). [4Fe-4S] cluster-binding residues include Cys440, Cys443, and Cys448.

The protein belongs to the ThiC family. Requires [4Fe-4S] cluster as cofactor.

It catalyses the reaction 5-amino-1-(5-phospho-beta-D-ribosyl)imidazole + S-adenosyl-L-methionine = 4-amino-2-methyl-5-(phosphooxymethyl)pyrimidine + CO + 5'-deoxyadenosine + formate + L-methionine + 3 H(+). The protein operates within cofactor biosynthesis; thiamine diphosphate biosynthesis. Functionally, catalyzes the synthesis of the hydroxymethylpyrimidine phosphate (HMP-P) moiety of thiamine from aminoimidazole ribotide (AIR) in a radical S-adenosyl-L-methionine (SAM)-dependent reaction. This is Phosphomethylpyrimidine synthase from Synechococcus sp. (strain CC9605).